Here is a 484-residue protein sequence, read N- to C-terminus: Glutamyl-tRNA(Gln) amidotransferase subunit B, mitochondrial (484 aa).

The protein belongs to the GatB/GatE family. GatB subfamily. Subunit of the heterotrimeric GatFAB amidotransferase (AdT) complex, composed of A, B and F subunits.

The protein resides in the mitochondrion. The enzyme catalyses L-glutamyl-tRNA(Gln) + L-glutamine + ATP + H2O = L-glutaminyl-tRNA(Gln) + L-glutamate + ADP + phosphate + H(+). Its function is as follows. Allows the formation of correctly charged Gln-tRNA(Gln) through the transamidation of misacylated Glu-tRNA(Gln) in the mitochondria. The reaction takes place in the presence of glutamine and ATP through an activated gamma-phospho-Glu-tRNA(Gln). The sequence is that of Glutamyl-tRNA(Gln) amidotransferase subunit B, mitochondrial from Candida tropicalis (strain ATCC MYA-3404 / T1) (Yeast).